Reading from the N-terminus, the 95-residue chain is ESAT-6-like protein EsxC (95 aa).

This sequence belongs to the WXG100 family. ESAT-6 subfamily.

The protein localises to the secreted. The protein is ESAT-6-like protein EsxC of Mycobacterium tuberculosis (strain CDC 1551 / Oshkosh).